A 579-amino-acid polypeptide reads, in one-letter code: Viral transcription factor IE2 (579 aa).

Residues 1–11 are compositionally biased toward basic and acidic residues; that stretch reads MESSAKRKMDP. 2 disordered regions span residues 1–30 and 99–161; these read MESSAKRKMDPDNPDEGPSSKVPRPETPVT and DSSS…VIIK. Over residues 99 to 133 the composition is skewed to polar residues; that stretch reads DSSSTGPTLTTHSCSVSSAPLNKPTPTSVAVTNTP. Glycyl lysine isopeptide (Lys-Gly) (interchain with G-Cter in SUMO) cross-links involve residues Lys-175 and Lys-180. The SUMO-interacting motif 1/SIM1 signature appears at 199-202; it reads CIVI. Residues 200 to 208 are non-covalent SUMO1 binding region (SIM); that stretch reads IVISDSEEE. Residues Ser-203 and Ser-205 each carry the phosphoserine modification. The segment at 206-335 is disordered; sequence EEEQGEEVET…SKRISELDNE (130 aa). 3 stretches are compositionally biased toward low complexity: residues 216 to 236, 259 to 270, and 301 to 316; these read RGATASSPSTGSGTPRVTSPT, SSSSSSCSSASD, and AASSSLLSCGHQSSGG. Residues 409–412 carry the SUMO-interacting motif 1/SIM2 motif; that stretch reads IQII. The SUMO-interacting motif 1/SIM3 motif lies at 500–503; that stretch reads VDLL.

The protein belongs to the HHV-5 IE2 protein family. Interacts with host SUMO-modified form of TATA-binding protein (TBP)-associated factor 12/TAF12 in a SIM-dependent manner; this interaction increases the transactivation activity of IE2. Interacts with host CHAF1A. Interacts with several components of the host transcriptional machinery including TBP, TF2B and CREB1. Interacts with host DNA replication licensing factor MCM3. Interacts with host PLSCR1; this interaction inhibits IE2 transactivating activity. Post-translationally, phosphorylated by host CK2 at Ser-203 and Ser-205; leading to enhanced SUMOylation. In terms of processing, SUMOylated; SUMOylation is enhanced when IE2 is phosphorylated by host CK2. The sumoylation is necessary for efficient replication of the virus and thus for the function of this viral transcription factor.

The protein localises to the host nucleus. In terms of biological role, stimulates viral early and late gene expression and thus play a crucial role in the regulation of productive infection. Selectively drives host RNA Pol II transcription initiation at a subset of viral early-late and late promoters without substantially affecting Pol II transcription of expressed host genes. Mechanistically, forms a repressive complex at the major immediate-early promoter region involving direct association with host nucleosomes and TBP. Concerning activation, stimulates transcription by binding nearby, but not within, core promoter regions. In addition, activates quiescent cells to reenter the cell cycle and up-regulates several E2F-responsive genes, which are responsible for pushing the cell into S phase. In S-phase, inhibits cellular DNA synthesis and blocks further cell cycle progression. This Homo sapiens (Human) protein is Viral transcription factor IE2 (UL122).